A 228-amino-acid chain; its full sequence is THAP domain-containing protein 2 (228 aa).

A THAP-type zinc finger spans residues 1-80 (MPTNCAAAGC…LKMDAVPTIF (80 aa)). An HCFC1-binding motif (HBM) motif is present at residues 123–126 (EHSY).

The chain is THAP domain-containing protein 2 (THAP2) from Homo sapiens (Human).